Reading from the N-terminus, the 239-residue chain is uncharacterized protein (239 aa).

Transmembrane regions (helical) follow at residues Val30–Ile50, Leu76–Ile96, Leu107–Ile127, Phe157–Leu177, Met188–Thr208, and Leu214–Leu234.

Belongs to the TatC family.

The protein resides in the plastid. It is found in the chloroplast membrane. This is an uncharacterized protein from Cyanidium caldarium (Red alga).